The following is a 303-amino-acid chain: Protein translocase subunit SecF (303 aa).

Transmembrane regions (helical) follow at residues 28–48 (SIILSLISFIWIGMYKFNFGI), 140–160 (IEAGTMAMLFSFAAIMIYIWV), 164–184 (WYFGLGILIALVHDVILALGF), 194–214 (LSTIAAVLTIIGYSVNDSVVI), 246–266 (ILTVVTTLLANLALVLFGGEA), and 272–292 (VLVFFGIIAGTYSSIFISAPI).

Belongs to the SecD/SecF family. SecF subfamily. Forms a complex with SecD. Part of the essential Sec protein translocation apparatus which comprises SecA, SecYEG and auxiliary proteins SecDF-YajC and YidC.

It is found in the cell inner membrane. Part of the Sec protein translocase complex. Interacts with the SecYEG preprotein conducting channel. SecDF uses the proton motive force (PMF) to complete protein translocation after the ATP-dependent function of SecA. The chain is Protein translocase subunit SecF from Rickettsia bellii (strain OSU 85-389).